Reading from the N-terminus, the 706-residue chain is Probable cyclic nucleotide-gated ion channel 3 (706 aa).

Over 1–85 (MMNPQRNKFV…NDSYLQSWNK (85 aa)) the chain is Cytoplasmic. A helical transmembrane segment spans residues 86–106 (IFLLLSVVALAFDPLFFYIPY). Topologically, residues 107-119 (VKPERFCLNLDKK) are extracellular. The chain crosses the membrane as a helical span at residues 120–140 (LQTIACVFRTFIDAFYVVHML). The Cytoplasmic segment spans residues 141–174 (FQFHTGFITPSSSGFGRGELNEKHKDIALRYLGS). The helical transmembrane segment at 175–195 (YFLIDLLSILPIPQVVVLAIV) threads the bilayer. The Extracellular portion of the chain corresponds to 196–208 (PRMRRPASLVAKE). The chain crosses the membrane as a helical span at residues 209-229 (LLKWVIFCQYVPRIARIYPLF). At 230-247 (KEVTRTSGLVTETAWAGA) the chain is on the cytoplasmic side. Residues 248 to 268 (ALNLFLYMLASHVFGSFWYLI) form a helical membrane-spanning segment. Residues 269 to 371 (SIERKDRCWR…QNLKTSAFEG (103 aa)) lie on the Extracellular side of the membrane. Residues 372 to 392 (EIIFAIVICISGLVLFALLIG) traverse the membrane as a helical segment. Residues 393-706 (NMQKYLQSTT…ADPEFPMDET (314 aa)) lie on the Cytoplasmic side of the membrane. A nucleoside 3',5'-cyclic phosphate is bound by residues 477–600 (WFQA…KQLR) and Asp548. The segment at 591 to 606 (YRRLHSKQLRHMFRFY) is calmodulin-binding. Residues 611–640 (QTWAACFIQAAWKRHCRRKLSKALREEEGK) enclose the IQ domain.

It belongs to the cyclic nucleotide-gated cation channel (TC 1.A.1.5) family. Homotetramer or heterotetramer.

Its subcellular location is the cell membrane. In terms of biological role, probable cyclic nucleotide-gated ion channel. The chain is Probable cyclic nucleotide-gated ion channel 3 (CNGC3) from Arabidopsis thaliana (Mouse-ear cress).